A 488-amino-acid polypeptide reads, in one-letter code: Glutamate--tRNA ligase (488 aa).

The short motif at 11 to 21 (PSPTGQIHIGN) is the 'HIGH' region element. Positions 108, 110, 135, and 137 each coordinate Zn(2+). Residues 252 to 256 (KLSKR) carry the 'KMSKS' region motif. Lysine 255 contributes to the ATP binding site.

It belongs to the class-I aminoacyl-tRNA synthetase family. Glutamate--tRNA ligase type 1 subfamily. Monomer. It depends on Zn(2+) as a cofactor.

It is found in the cytoplasm. It catalyses the reaction tRNA(Glu) + L-glutamate + ATP = L-glutamyl-tRNA(Glu) + AMP + diphosphate. Catalyzes the attachment of glutamate to tRNA(Glu) in a two-step reaction: glutamate is first activated by ATP to form Glu-AMP and then transferred to the acceptor end of tRNA(Glu). The sequence is that of Glutamate--tRNA ligase from Natranaerobius thermophilus (strain ATCC BAA-1301 / DSM 18059 / JW/NM-WN-LF).